The chain runs to 251 residues: MDERHEAAGETSEKPKVLFLLNSYYGPFYDDGDNTGVNVVDLYEAFKVFEENGFDIVIASDTGDYGFDDKSFRDPAIVDETQSIFSNPDCSLMKKLKNIARLDRLNPSDYVIVYIPGGYGCSFDFPHAKVVQDFLYRFYETKGIICAVAQANIALAYTTNSDGQALCTNRRVTGCTWKDEVQNGVLNVMNRLNFYSFGHIAENIGAIFESPPVYVEDPFIVEDGQLFTGSNTNSAKGVAMEAVRAVLNYDG.

This sequence belongs to the peptidase C56 family. HSP31-like subfamily.

The protein localises to the cytoplasm. It localises to the nucleus. The enzyme catalyses methylglyoxal + H2O = (R)-lactate + H(+). Its function is as follows. May catalyze the conversion of methylglyoxal (MG) to D-lactate in a single glutathione (GSH)-independent step. May play a role in detoxifying endogenously produced glyoxals. Involved in protection against reactive oxygen species (ROS). The sequence is that of Putative glutathione-independent glyoxalase hsp3105 from Schizosaccharomyces pombe (strain 972 / ATCC 24843) (Fission yeast).